A 945-amino-acid polypeptide reads, in one-letter code: Valine--tRNA ligase (945 aa).

A 'HIGH' region motif is present at residues 42-52 (PNVTGTLHMGH). A 'KMSKS' region motif is present at residues 552–556 (KMSKS). Lysine 555 is an ATP binding site. Residues 879 to 945 (DKAAETARLS…VQNQLAKLKD (67 aa)) adopt a coiled-coil conformation.

It belongs to the class-I aminoacyl-tRNA synthetase family. ValS type 1 subfamily. Monomer.

It localises to the cytoplasm. The enzyme catalyses tRNA(Val) + L-valine + ATP = L-valyl-tRNA(Val) + AMP + diphosphate. Functionally, catalyzes the attachment of valine to tRNA(Val). As ValRS can inadvertently accommodate and process structurally similar amino acids such as threonine, to avoid such errors, it has a 'posttransfer' editing activity that hydrolyzes mischarged Thr-tRNA(Val) in a tRNA-dependent manner. The chain is Valine--tRNA ligase from Neisseria gonorrhoeae (strain ATCC 700825 / FA 1090).